We begin with the raw amino-acid sequence, 549 residues long: Beta-hexosaminidase Amuc_0868 (549 aa).

The signal sequence occupies residues 1–28 (MISKCTFSATVFSLFSLCWGAPSSPVLE). Arg-161 contacts substrate. Active-site charge relay system residues include Asp-190 and His-260. Asp-326 contacts substrate. Glu-327 acts as the Charge relay system in catalysis. Substrate contacts are provided by residues Trp-393, 420–422 (YFD), and 474–476 (WTE). The segment at 526 to 549 (GVNYKRPDNGAPAQPKAVITRERR) is disordered.

The protein belongs to the glycosyl hydrolase 20 family.

It catalyses the reaction Hydrolysis of terminal non-reducing N-acetyl-D-hexosamine residues in N-acetyl-beta-D-hexosaminides.. Its activity is regulated as follows. Inhibited strongly by Cu(2+), Zn(2+), Cd(2+) and Ni(2+) ions. No effect on activity with Na(+), Li(+), K(+), Ca(2+), Mg(2+) or Mn(2+) ions. Its function is as follows. Potentially capable of cleaving the specific glycoside linkages in the process of mucin degradation in human intestinal tract. Hydrolyzes chromogenic substrates pNP-beta-GlcNAc with high activity and pNP-beta-GalNAc to a lesser extent, but not pNP-beta-glucose or pNP-beta-galactose. This is Beta-hexosaminidase Amuc_0868 from Akkermansia muciniphila (strain ATCC BAA-835 / DSM 22959 / JCM 33894 / BCRC 81048 / CCUG 64013 / CIP 107961 / Muc).